The primary structure comprises 396 residues: Tryptophan synthase beta chain (396 aa).

An N6-(pyridoxal phosphate)lysine modification is found at lysine 88.

The protein belongs to the TrpB family. Tetramer of two alpha and two beta chains. Pyridoxal 5'-phosphate is required as a cofactor.

The catalysed reaction is (1S,2R)-1-C-(indol-3-yl)glycerol 3-phosphate + L-serine = D-glyceraldehyde 3-phosphate + L-tryptophan + H2O. It functions in the pathway amino-acid biosynthesis; L-tryptophan biosynthesis; L-tryptophan from chorismate: step 5/5. In terms of biological role, the beta subunit is responsible for the synthesis of L-tryptophan from indole and L-serine. This Actinobacillus pleuropneumoniae serotype 7 (strain AP76) protein is Tryptophan synthase beta chain.